Consider the following 800-residue polypeptide: Chondroitin sulfate synthase 1 (800 aa).

Over 1–7 (MAARGRR) the chain is Cytoplasmic. Residues 8–28 (AWLSMLLGLVLGFVLASRLVL) form a helical; Signal-anchor for type II membrane protein membrane-spanning segment. At 29 to 800 (PRASELKRVG…GGSHGSARTA (772 aa)) the chain is on the lumenal side. The tract at residues 36-66 (RVGPRRRPSPEGCRPGQEASQPGGARGDARG) is disordered. N-linked (GlcNAc...) asparagine glycans are attached at residues N188 and N622. A divalent metal cation is bound by residues D632 and H746.

The protein belongs to the chondroitin N-acetylgalactosaminyltransferase family. The cofactor is Co(2+). Mn(2+) is required as a cofactor. It depends on Cd(2+) as a cofactor.

The protein localises to the golgi apparatus. The protein resides in the golgi stack membrane. Its subcellular location is the secreted. The catalysed reaction is 3-O-(beta-D-GlcA-(1-&gt;3)-beta-D-GalNAc-(1-&gt;4)-beta-D-GlcA-(1-&gt;3)-beta-D-Gal-(1-&gt;3)-beta-D-Gal-(1-&gt;4)-beta-D-Xyl)-L-seryl-[protein] + UDP-N-acetyl-alpha-D-galactosamine = 3-O-(beta-D-GalNAc-(1-&gt;4)-beta-D-GlcA-(1-&gt;3)-beta-D-GalNAc-(1-&gt;4)-beta-D-GlcA-(1-&gt;3)-beta-D-Gal-(1-&gt;3)-beta-D-Gal-(1-&gt;4)-beta-D-Xyl)-L-seryl-[protein] + UDP + H(+). It carries out the reaction 3-O-{beta-D-GlcA-(1-&gt;3)-[beta-D-GalNAc-(1-&gt;4)-beta-D-GlcA-(1-&gt;3)](n)-beta-D-GalNAc-(1-&gt;4)-beta-D-GlcA-(1-&gt;3)-beta-D-Gal-(1-&gt;3)-beta-D-Gal-(1-&gt;4)-beta-D-Xyl}-L-seryl-[protein] + UDP-N-acetyl-alpha-D-galactosamine = 3-O-{[beta-D-GalNAc-(1-&gt;4)-beta-D-GlcA-(1-&gt;3)](n+1)-beta-D-GalNAc-(1-&gt;4)-beta-D-GlcA-(1-&gt;3)-beta-D-Gal-(1-&gt;3)-beta-D-Gal-(1-&gt;4)-beta-D-Xyl}-L-seryl-[protein] + UDP + H(+). It catalyses the reaction 3-O-(beta-D-GalNAc-(1-&gt;4)-beta-D-GlcA-(1-&gt;3)-beta-D-Gal-(1-&gt;3)-beta-D-Gal-(1-&gt;4)-beta-D-Xyl)-L-seryl-[protein] + UDP-alpha-D-glucuronate = 3-O-(beta-D-GlcA-(1-&gt;3)-beta-D-GalNAc-(1-&gt;4)-beta-D-GlcA-(1-&gt;3)-beta-D-Gal-(1-&gt;3)-beta-D-Gal-(1-&gt;4)-beta-D-Xyl)-L-seryl-[protein] + UDP + H(+). The enzyme catalyses 3-O-{[beta-D-GalNAc-(1-&gt;4)-beta-D-GlcA-(1-&gt;3)](n)-beta-D-GalNAc-(1-&gt;4)-beta-D-GlcA-(1-&gt;3)-beta-D-Gal-(1-&gt;3)-beta-D-Gal-(1-&gt;4)-beta-D-Xyl}-L-seryl-[protein] + UDP-alpha-D-glucuronate = 3-O-{beta-D-GlcA-(1-&gt;3)-[beta-D-GalNAc-(1-&gt;4)-beta-D-GlcA-(1-&gt;3)](n)-beta-D-GalNAc-(1-&gt;4)-beta-D-GlcA-(1-&gt;3)-beta-D-Gal-(1-&gt;3)-beta-D-Gal-(1-&gt;4)-beta-D-Xyl}-L-seryl-[protein] + UDP + H(+). Functionally, has both beta-1,3-glucuronic acid and beta-1,4-N-acetylgalactosamine transferase activity. Transfers glucuronic acid (GlcUA) from UDP-GlcUA and N-acetylgalactosamine (GalNAc) from UDP-GalNAc to the non-reducing end of the elongating chondroitin polymer. Involved in the negative control of osteogenesis likely through the modulation of NOTCH signaling. In Mus musculus (Mouse), this protein is Chondroitin sulfate synthase 1 (Chsy1).